Here is a 184-residue protein sequence, read N- to C-terminus: NADH-quinone oxidoreductase subunit B (184 aa).

[4Fe-4S] cluster is bound by residues Cys-37, Cys-38, Cys-103, and Cys-132.

The protein belongs to the complex I 20 kDa subunit family. In terms of assembly, NDH-1 is composed of 14 different subunits. Subunits NuoB, C, D, E, F, and G constitute the peripheral sector of the complex. It depends on [4Fe-4S] cluster as a cofactor.

Its subcellular location is the cell membrane. The enzyme catalyses a quinone + NADH + 5 H(+)(in) = a quinol + NAD(+) + 4 H(+)(out). In terms of biological role, NDH-1 shuttles electrons from NADH, via FMN and iron-sulfur (Fe-S) centers, to quinones in the respiratory chain. The immediate electron acceptor for the enzyme in this species is believed to be a menaquinone. Couples the redox reaction to proton translocation (for every two electrons transferred, four hydrogen ions are translocated across the cytoplasmic membrane), and thus conserves the redox energy in a proton gradient. The chain is NADH-quinone oxidoreductase subunit B from Beutenbergia cavernae (strain ATCC BAA-8 / DSM 12333 / CCUG 43141 / JCM 11478 / NBRC 16432 / NCIMB 13614 / HKI 0122).